Here is a 296-residue protein sequence, read N- to C-terminus: Glycine--tRNA ligase alpha subunit (296 aa).

The protein belongs to the class-II aminoacyl-tRNA synthetase family. In terms of assembly, tetramer of two alpha and two beta subunits.

The protein resides in the cytoplasm. It catalyses the reaction tRNA(Gly) + glycine + ATP = glycyl-tRNA(Gly) + AMP + diphosphate. This chain is Glycine--tRNA ligase alpha subunit, found in Synechococcus sp. (strain WH7803).